The primary structure comprises 788 residues: MKDKSIKVLEFNKIQEILKNYTCTKAGKDIIEDLKPYDSVYEVREHLEETKEAFKLLITKGAPPFEGVYDIRNGIYLAEKGSALLPGQLLKIAAVLRCARRFREYINHKEQEESYRVLENICEGIFSLPKIEEEIFNAIEGEDEIADRASSTLYNIRRSLKEKNYSVRDKINSLVRSYSSYLQENIYTVRRDRYVLPVKAEHKGAVPGLVHDQSSTGATLFIEPMSLVNLNNEIKELMLKEKAEIERILTVLSAKINANITGVKTDANIVWELDFIFAKAKFASEYNCTCPTINDEGIVDIIEGRHPLIDRREVVPISVKLGEEFTSLMITGPNTGGKTVTLKTVGLIHLMAMSGLMIPARENSVISYFNNVFADIGDEQSIEQSLSTFSSHMKNIVEIMDKADENSLVLFDELGAGTDPTEGAALAISILENLRKRGAKIIATTHYSELKAYALRKEGVENASVEFDVETLRPTYRLLIGIPGKSNAFEISKRLGLPDYIIDFARENISNENIRFEELIQNLQEKSIKAQEDARLAENLKLERDKEKKKYEEKLEGLQKVRDNALIDARREAKNIIKEAKEEADKILKDIRQLERMGYSSDARRKLEEERKKLKDKLDSIEEKEIKTVHKGEALKNVKEGDEVLLASINQKVIVLSKPDNKGDVLVQAGIMKITANIKDLRAAKGSNFNSNSSKTKKSKKLNLNLRKVESSVDLRGMDAEEAIYTVDKYLDEAYLGGLGEVTIVHGKGTGVLRKTIMDMLKGHPHVKRYRLGEYGEGGTGVTVVEIK.

332-339 (GPNTGGKT) is a binding site for ATP. The region spanning 713–788 (VDLRGMDAEE…GTGVTVVEIK (76 aa)) is the Smr domain.

It belongs to the DNA mismatch repair MutS family. MutS2 subfamily. In terms of assembly, homodimer. Binds to stalled ribosomes, contacting rRNA.

In terms of biological role, endonuclease that is involved in the suppression of homologous recombination and thus may have a key role in the control of bacterial genetic diversity. Functionally, acts as a ribosome collision sensor, splitting the ribosome into its 2 subunits. Detects stalled/collided 70S ribosomes which it binds and splits by an ATP-hydrolysis driven conformational change. Acts upstream of the ribosome quality control system (RQC), a ribosome-associated complex that mediates the extraction of incompletely synthesized nascent chains from stalled ribosomes and their subsequent degradation. Probably generates substrates for RQC. This chain is Endonuclease MutS2, found in Clostridium botulinum (strain 657 / Type Ba4).